Reading from the N-terminus, the 517-residue chain is MQRSDPPRPLLEMRGISKTFPAVRALAGVSLTVHPGEVHSLMGENGAGKSTLMKILSGAYQADPGGEILIDGRPISIDGPLAARDAGVAVIYQELCLAPNLSVAENIHVGRELRRGNGRRGTIDRAAMARGCQDVLERLGADFGPNTLVGTLSIAEQQLVEIARAVHTRARILVMDEPTTPLSSRETDNLFRLIRQLRAEGLAIIYISHRMAEIYELSDRVSVLRDGAYVGTLERDALSAERLVGMMVGRDISGFYKKAHAPYDPGNLLLSVRDIADGARVRGCSLDLHAGEVLGIAGLVGAGRTELARLIFGAEPRVRGEVTLAGKAFAAHSPREAIDAGLVYLTEDRKRQGLFLDMSVRENINISVCGRDARLGALDLARGAQRARDAIAALSIRVPHANVNVGALSGGNQQKVLLSRLLETKPRVLILDEPTRGVDIGAKSEIYRIINELARAGVGVIVISSELPEIIGVADRVLVMREGRIAGELGGRTDAPITQEAIIALATGSRTEASAAH.

ABC transporter domains follow at residues 11 to 251 (LEMR…VGRD) and 263 to 507 (YDPG…ALAT). Residue 43–50 (GENGAGKS) coordinates ATP.

It belongs to the ABC transporter superfamily. Ribose importer (TC 3.A.1.2.1) family. In terms of assembly, the complex is composed of an ATP-binding protein (RbsA), two transmembrane proteins (RbsC) and a solute-binding protein (RbsB).

It is found in the cell inner membrane. It catalyses the reaction D-ribose(out) + ATP + H2O = D-ribose(in) + ADP + phosphate + H(+). Functionally, part of the ABC transporter complex RbsABC involved in ribose import. Responsible for energy coupling to the transport system. This Burkholderia pseudomallei (strain K96243) protein is Ribose import ATP-binding protein RbsA.